The following is a 382-amino-acid chain: Probable dual-specificity RNA methyltransferase RlmN (382 aa).

Glutamate 118 (proton acceptor) is an active-site residue. Residues 124–370 form the Radical SAM core domain; that stretch reads YDKRVTMCIS…TTVRDTRGSD (247 aa). Cysteine 131 and cysteine 375 are oxidised to a cystine. [4Fe-4S] cluster-binding residues include cysteine 138, cysteine 142, and cysteine 145. S-adenosyl-L-methionine-binding positions include 196–197, serine 230, 253–255, and asparagine 332; these read GE and SLH. The active-site S-methylcysteine intermediate is the cysteine 375.

This sequence belongs to the radical SAM superfamily. RlmN family. [4Fe-4S] cluster serves as cofactor.

It localises to the cytoplasm. It carries out the reaction adenosine(2503) in 23S rRNA + 2 reduced [2Fe-2S]-[ferredoxin] + 2 S-adenosyl-L-methionine = 2-methyladenosine(2503) in 23S rRNA + 5'-deoxyadenosine + L-methionine + 2 oxidized [2Fe-2S]-[ferredoxin] + S-adenosyl-L-homocysteine. It catalyses the reaction adenosine(37) in tRNA + 2 reduced [2Fe-2S]-[ferredoxin] + 2 S-adenosyl-L-methionine = 2-methyladenosine(37) in tRNA + 5'-deoxyadenosine + L-methionine + 2 oxidized [2Fe-2S]-[ferredoxin] + S-adenosyl-L-homocysteine. Its function is as follows. Specifically methylates position 2 of adenine 2503 in 23S rRNA and position 2 of adenine 37 in tRNAs. The polypeptide is Probable dual-specificity RNA methyltransferase RlmN (Kocuria rhizophila (strain ATCC 9341 / DSM 348 / NBRC 103217 / DC2201)).